We begin with the raw amino-acid sequence, 395 residues long: Elongation factor Tu (395 aa).

The region spanning 10–204 (KPHVNVGTIG…AVDEYIPEPT (195 aa)) is the tr-type G domain. Residues 19–26 (GHVDHGKT) form a G1 region. Position 19-26 (19-26 (GHVDHGKT)) interacts with GTP. Threonine 26 is a Mg(2+) binding site. Positions 60 to 64 (GITIA) are G2. The tract at residues 81-84 (DCPG) is G3. GTP-binding positions include 81–85 (DCPGH) and 136–139 (NKVD). Residues 136-139 (NKVD) form a G4 region. Residues 174-176 (SAL) are G5.

The protein belongs to the TRAFAC class translation factor GTPase superfamily. Classic translation factor GTPase family. EF-Tu/EF-1A subfamily. Monomer.

It localises to the cytoplasm. The catalysed reaction is GTP + H2O = GDP + phosphate + H(+). In terms of biological role, GTP hydrolase that promotes the GTP-dependent binding of aminoacyl-tRNA to the A-site of ribosomes during protein biosynthesis. The protein is Elongation factor Tu of Exiguobacterium sibiricum (strain DSM 17290 / CCUG 55495 / CIP 109462 / JCM 13490 / 255-15).